The chain runs to 563 residues: Lengsin (563 aa).

A disordered region spans residues 1-115; that stretch reads MTDEGDLAQE…PNTDPTRYNA (115 aa). Residues 26-37 show a composition bias toward basic residues; that stretch reads SKLRRARRKVTK. Polar residues-rich tracts occupy residues 51-62 and 105-115; these read ANSSEMSRNQIA and SPNTDPTRYNA. The GS beta-grasp domain occupies 137–231; it reads NHLQFVRFEA…VICDTFTVTG (95 aa). Positions 238 to 563 constitute a GS catalytic domain; the sequence is PRYIAKRQLR…EGNKFLEYFI (326 aa).

Belongs to the glutamine synthetase family. Dodecamer. Interacts with BFSP2 and VIM. In terms of tissue distribution, expressed in lens.

May act as a component of the cytoskeleton or as a chaperone for the reorganization of intermediate filament proteins during terminal differentiation in the lens. Does not seem to have enzymatic activity. The protein is Lengsin (Lgsn) of Mus musculus (Mouse).